The sequence spans 146 residues: MORN repeat-containing protein 4 (146 aa).

4 MORN repeats span residues 16–38 (YRGE…DGGT), 39–61 (YLGH…DGSR), 62–84 (YEGE…DNMT), and 85–107 (FEGE…DGSH).

Interacts with MYO3A.

Its subcellular location is the cytoplasm. The protein localises to the cell projection. It localises to the filopodium tip. The protein resides in the stereocilium. Plays a role in promoting axonal degeneration following neuronal injury by toxic insult or trauma. This is MORN repeat-containing protein 4 (MORN4) from Homo sapiens (Human).